A 236-amino-acid polypeptide reads, in one-letter code: Adenylate dimethylallyltransferase (236 aa).

This sequence belongs to the isopentenyl transferase family.

It catalyses the reaction dimethylallyl diphosphate + AMP = N(6)-(dimethylallyl)adenosine 5'-phosphate + diphosphate. Functionally, transfers dimethylallyl groups to AMP as part of the biosynthesis of cytokinin phytohormones. This is Adenylate dimethylallyltransferase (ipt) from Allorhizobium ampelinum (strain ATCC BAA-846 / DSM 112012 / S4) (Agrobacterium vitis (strain S4)).